We begin with the raw amino-acid sequence, 106 residues long: ER membrane protein complex subunit 5 (106 aa).

Topologically, residues Met-1–Ser-12 are cytoplasmic. A helical transmembrane segment spans residues Val-13–Leu-33. Topologically, residues Glu-34 to Lys-46 are lumenal. Residues Cys-47–Leu-67 form a helical membrane-spanning segment. Over Arg-68–Asn-106 the chain is Cytoplasmic.

This sequence belongs to the membrane magnesium transporter (TC 1.A.67) family. In terms of assembly, component of the ER membrane protein complex (EMC).

It localises to the endoplasmic reticulum membrane. Functionally, the EMC seems to be required for efficient folding of proteins in the endoplasmic reticulum (ER). The sequence is that of ER membrane protein complex subunit 5 (emc5) from Schizosaccharomyces pombe (strain 972 / ATCC 24843) (Fission yeast).